A 378-amino-acid chain; its full sequence is Heterogeneous nuclear ribonucleoprotein A3 (378 aa).

Met-1 is modified (N-acetylmethionine). Positions 1–10 are enriched in pro residues; that stretch reads MEVKPPPGRP. The tract at residues 1 to 34 is disordered; it reads MEVKPPPGRPQPDSGRRRRRRGEEGHDPKEPEQL. Lys-4 is covalently cross-linked (Glycyl lysine isopeptide (Lys-Gly) (interchain with G-Cter in SUMO2)). Phosphoserine is present on Ser-14. The segment covering 21-34 has biased composition (basic and acidic residues); it reads RGEEGHDPKEPEQL. The RRM 1 domain occupies 35–118; that stretch reads RKLFIGGLSF…RAVSREDSVK (84 aa). Lys-36 is covalently cross-linked (Glycyl lysine isopeptide (Lys-Gly) (interchain with G-Cter in SUMO2)). The residue at position 43 (Ser-43) is a Phosphoserine. The residue at position 52 (Arg-52) is a Dimethylated arginine; alternate. Arg-52 is subject to Omega-N-methylarginine; alternate. Position 76 is an omega-N-methylarginine (Arg-76). A phosphoserine mark is found at Ser-112 and Ser-116. A Glycyl lysine isopeptide (Lys-Gly) (interchain with G-Cter in SUMO2) cross-link involves residue Lys-118. A Phosphothreonine modification is found at Thr-124. The 80-residue stretch at 126 to 205 folds into the RRM 2 domain; sequence KKIFVGGIKE…CEVKKALSKQ (80 aa). Lys-134 bears the N6-acetyllysine; alternate mark. Lys-134 is covalently cross-linked (Glycyl lysine isopeptide (Lys-Gly) (interchain with G-Cter in SUMO2); alternate). Residues Lys-151 and Lys-182 each participate in a glycyl lysine isopeptide (Lys-Gly) (interchain with G-Cter in SUMO2) cross-link. A disordered region spans residues 204–225; it reads KQEMQSAGSQRGRGGGSGNFMG. An omega-N-methylarginine; alternate mark is found at Arg-214, Arg-216, Arg-226, Arg-239, and Arg-246. Asymmetric dimethylarginine; alternate occurs at positions 214, 216, 226, 239, and 246. Residues 214 to 225 are compositionally biased toward gly residues; sequence RGRGGGSGNFMG. The residue at position 257 (Arg-257) is an Omega-N-methylarginine. Position 286 is an asymmetric dimethylarginine (Arg-286). The interval 336–378 is disordered; that stretch reads SGQQQSNYGPMKGGSFGGRSSGSPYGGGYGSGGGSGGYGSRRF. Residues 346 to 378 show a composition bias toward gly residues; it reads MKGGSFGGRSSGSPYGGGYGSGGGSGGYGSRRF. The residue at position 350 (Ser-350) is a Phosphoserine. Arg-354 carries the post-translational modification Omega-N-methylarginine. Ser-358 is subject to Phosphoserine. Residues Tyr-360 and Tyr-364 each carry the phosphotyrosine modification. Residues Ser-366 and Ser-370 each carry the phosphoserine modification. Tyr-373 carries the post-translational modification Phosphotyrosine. Ser-375 is subject to Phosphoserine.

In terms of assembly, identified in the spliceosome C complex.

The protein resides in the nucleus. Plays a role in cytoplasmic trafficking of RNA. Binds to the cis-acting response element, A2RE. May be involved in pre-mRNA splicing. The protein is Heterogeneous nuclear ribonucleoprotein A3 (HNRNPA3) of Homo sapiens (Human).